Consider the following 147-residue polypeptide: MSQQLTFKQLEKAQQGDSFDWEAVKKQVKYDDNGLIPAIAQQFDSKEVLMMAWMNEAALQETLETGRVCYWSRSRQSYWRKGEESGQIQLLKDLRFDCDGDAILLLVDQTGPACHTGRKSCFYTAIHDHQAKILTNPIIDPEALYKK.

Aspartate 97 contributes to the Mg(2+) binding site. Cysteine 98 is a Zn(2+) binding site. Mg(2+)-binding residues include aspartate 99 and aspartate 101. Residues cysteine 114 and cysteine 121 each coordinate Zn(2+).

This sequence belongs to the PRA-CH family. As to quaternary structure, homodimer. The cofactor is Mg(2+). It depends on Zn(2+) as a cofactor.

The protein resides in the cytoplasm. The catalysed reaction is 1-(5-phospho-beta-D-ribosyl)-5'-AMP + H2O = 1-(5-phospho-beta-D-ribosyl)-5-[(5-phospho-beta-D-ribosylamino)methylideneamino]imidazole-4-carboxamide. The protein operates within amino-acid biosynthesis; L-histidine biosynthesis; L-histidine from 5-phospho-alpha-D-ribose 1-diphosphate: step 3/9. Functionally, catalyzes the hydrolysis of the adenine ring of phosphoribosyl-AMP. The sequence is that of Phosphoribosyl-AMP cyclohydrolase from Hydrogenovibrio crunogenus (strain DSM 25203 / XCL-2) (Thiomicrospira crunogena).